The primary structure comprises 564 residues: ATP-dependent RNA helicase ROK1 (564 aa).

2 disordered regions span residues 1–25 and 62–87; these read MDIF…KAAD and EDDR…DGLI. 2 stretches are compositionally biased toward basic and acidic residues: residues 13–23 and 62–86; these read VKKESGPKAKA and EDDR…DDGL. The Q motif motif lies at 122-150; sequence DLISRFSFDRRLLNNLIENGFTEPTPIQC. The Helicase ATP-binding domain maps to 153 to 333; the sequence is IPVALNNRDV…QSIMMDPVRV (181 aa). 166 to 173 lines the ATP pocket; the sequence is GPTGSGKT. The DEAD box motif lies at 280-283; the sequence is DEAD. The 163-residue stretch at 344–506 folds into the Helicase C-terminal domain; sequence NIEQKLIFCG…EVSEWMDKMA (163 aa). The interval 512–564 is disordered; the sequence is EKESIKNGKAHKERKQITTVPKMDKAKRRRQQEMIAASKRRKNEELSKKHFSK. Basic and acidic residues predominate over residues 553 to 564; that stretch reads KNEELSKKHFSK.

Belongs to the DEAD box helicase family. DDX52/ROK1 subfamily. As to quaternary structure, interacts with the U3 snoRNA and is associated with the 90S and 40S pre-ribosomes. This association requires the presence of RRP5. Also interacts with OSH3.

It is found in the nucleus. The protein resides in the nucleolus. It catalyses the reaction ATP + H2O = ADP + phosphate + H(+). Functionally, ATP-dependent RNA helicase involved in 40S ribosomal subunit biogenesis. Required for the processing and cleavage of 35S pre-rRNA at sites A0, A1, and A2, leading to mature 18S rRNA. The chain is ATP-dependent RNA helicase ROK1 (ROK1) from Saccharomyces cerevisiae (strain YJM789) (Baker's yeast).